The primary structure comprises 133 residues: Fatty acid-binding protein homolog 1 (133 aa).

At Met1 the chain carries N-acetylmethionine. Hexadecanoate contacts are provided by residues Arg107 and 127–129 (RTY).

This sequence belongs to the calycin superfamily. Fatty-acid binding protein (FABP) family.

Functionally, has been implicated in the acquisition, storage, and transport of lipids, and may be important to the organism since it is incapable of synthesizing most of its lipids de novo. This Echinococcus granulosus (Hydatid tapeworm) protein is Fatty acid-binding protein homolog 1 (FABP1).